The chain runs to 250 residues: NAD(P)H-quinone oxidoreductase subunit K (250 aa).

[4Fe-4S] cluster contacts are provided by cysteine 60, cysteine 61, cysteine 125, and cysteine 156. Residues 230–250 (ELNTPEIDVSPASQSSSTYES) form a disordered region. Polar residues predominate over residues 240-250 (PASQSSSTYES).

Belongs to the complex I 20 kDa subunit family. In terms of assembly, NDH-1 can be composed of about 15 different subunits; different subcomplexes with different compositions have been identified which probably have different functions. Requires [4Fe-4S] cluster as cofactor.

Its subcellular location is the cellular thylakoid membrane. It carries out the reaction a plastoquinone + NADH + (n+1) H(+)(in) = a plastoquinol + NAD(+) + n H(+)(out). The enzyme catalyses a plastoquinone + NADPH + (n+1) H(+)(in) = a plastoquinol + NADP(+) + n H(+)(out). NDH-1 shuttles electrons from an unknown electron donor, via FMN and iron-sulfur (Fe-S) centers, to quinones in the respiratory and/or the photosynthetic chain. The immediate electron acceptor for the enzyme in this species is believed to be plastoquinone. Couples the redox reaction to proton translocation, and thus conserves the redox energy in a proton gradient. Cyanobacterial NDH-1 also plays a role in inorganic carbon-concentration. The chain is NAD(P)H-quinone oxidoreductase subunit K from Prochlorococcus marinus (strain MIT 9313).